The following is a 92-amino-acid chain: MNKQYSYPLDLSWSTEELASVLSFFNDVEAAYEGKVEAKKLLDSYKGFKAVVPSKSEEKRLGREFETVSGYSLYRAVQAAKEKGEGKISLGK.

It belongs to the UPF0223 family.

In Streptococcus pneumoniae serotype 4 (strain ATCC BAA-334 / TIGR4), this protein is UPF0223 protein SP_1404.